Consider the following 344-residue polypeptide: UDP-N-acetylenolpyruvoylglucosamine reductase (344 aa).

Residues 19-189 enclose the FAD-binding PCMH-type domain; it reads INVTAKKIIF…IAVGIKIKKN (171 aa). Arg165 is a catalytic residue. Ser235 functions as the Proton donor in the catalytic mechanism. Glu331 is a catalytic residue.

This sequence belongs to the MurB family. FAD is required as a cofactor.

The protein localises to the cytoplasm. The enzyme catalyses UDP-N-acetyl-alpha-D-muramate + NADP(+) = UDP-N-acetyl-3-O-(1-carboxyvinyl)-alpha-D-glucosamine + NADPH + H(+). The protein operates within cell wall biogenesis; peptidoglycan biosynthesis. Functionally, cell wall formation. This is UDP-N-acetylenolpyruvoylglucosamine reductase from Buchnera aphidicola subsp. Schizaphis graminum (strain Sg).